Consider the following 217-residue polypeptide: tRNA (guanine-N(7)-)-methyltransferase (217 aa).

S-adenosyl-L-methionine contacts are provided by glutamate 44, aspartate 69, aspartate 96, and aspartate 118. Residue aspartate 118 is part of the active site. A substrate-binding site is contributed by lysine 122. The interval 124–129 is interaction with RNA; that stretch reads RHEKRR. Residues aspartate 154 and 193 to 196 each bind substrate; that span reads TEYE.

The protein belongs to the class I-like SAM-binding methyltransferase superfamily. TrmB family.

It carries out the reaction guanosine(46) in tRNA + S-adenosyl-L-methionine = N(7)-methylguanosine(46) in tRNA + S-adenosyl-L-homocysteine. It functions in the pathway tRNA modification; N(7)-methylguanine-tRNA biosynthesis. Its function is as follows. Catalyzes the formation of N(7)-methylguanine at position 46 (m7G46) in tRNA. The polypeptide is tRNA (guanine-N(7)-)-methyltransferase (Lactococcus lactis subsp. cremoris (strain SK11)).